The primary structure comprises 521 residues: Bifunctional purine biosynthesis protein PurH (521 aa).

In terms of domain architecture, MGS-like spans 1–147; sequence MAKITRALIS…KNNADVTVVV (147 aa).

The protein belongs to the PurH family.

It catalyses the reaction (6R)-10-formyltetrahydrofolate + 5-amino-1-(5-phospho-beta-D-ribosyl)imidazole-4-carboxamide = 5-formamido-1-(5-phospho-D-ribosyl)imidazole-4-carboxamide + (6S)-5,6,7,8-tetrahydrofolate. The enzyme catalyses IMP + H2O = 5-formamido-1-(5-phospho-D-ribosyl)imidazole-4-carboxamide. The protein operates within purine metabolism; IMP biosynthesis via de novo pathway; 5-formamido-1-(5-phospho-D-ribosyl)imidazole-4-carboxamide from 5-amino-1-(5-phospho-D-ribosyl)imidazole-4-carboxamide (10-formyl THF route): step 1/1. Its pathway is purine metabolism; IMP biosynthesis via de novo pathway; IMP from 5-formamido-1-(5-phospho-D-ribosyl)imidazole-4-carboxamide: step 1/1. This Geobacter metallireducens (strain ATCC 53774 / DSM 7210 / GS-15) protein is Bifunctional purine biosynthesis protein PurH.